A 97-amino-acid polypeptide reads, in one-letter code: Small integral membrane protein 8 (97 aa).

A disordered region spans residues 1-24 (MSSAPEPPTFKKEPPKEKDFQSPG). Residues 9 to 20 (TFKKEPPKEKDF) are compositionally biased toward basic and acidic residues. A helical membrane pass occupies residues 48-67 (PVMAFGLVTLSLCVAYIGYL).

The protein belongs to the SMIM8 family.

It localises to the membrane. This Pongo abelii (Sumatran orangutan) protein is Small integral membrane protein 8 (SMIM8).